A 281-amino-acid chain; its full sequence is Lipoyl synthase (281 aa).

[4Fe-4S] cluster contacts are provided by C37, C42, C48, C63, C67, C70, and S274. Residues W49–K263 enclose the Radical SAM core domain.

It belongs to the radical SAM superfamily. Lipoyl synthase family. [4Fe-4S] cluster is required as a cofactor.

It is found in the cytoplasm. It catalyses the reaction [[Fe-S] cluster scaffold protein carrying a second [4Fe-4S](2+) cluster] + N(6)-octanoyl-L-lysyl-[protein] + 2 oxidized [2Fe-2S]-[ferredoxin] + 2 S-adenosyl-L-methionine + 4 H(+) = [[Fe-S] cluster scaffold protein] + N(6)-[(R)-dihydrolipoyl]-L-lysyl-[protein] + 4 Fe(3+) + 2 hydrogen sulfide + 2 5'-deoxyadenosine + 2 L-methionine + 2 reduced [2Fe-2S]-[ferredoxin]. It participates in protein modification; protein lipoylation via endogenous pathway; protein N(6)-(lipoyl)lysine from octanoyl-[acyl-carrier-protein]: step 2/2. Functionally, catalyzes the radical-mediated insertion of two sulfur atoms into the C-6 and C-8 positions of the octanoyl moiety bound to the lipoyl domains of lipoate-dependent enzymes, thereby converting the octanoylated domains into lipoylated derivatives. The sequence is that of Lipoyl synthase from Parabacteroides distasonis (strain ATCC 8503 / DSM 20701 / CIP 104284 / JCM 5825 / NCTC 11152).